The primary structure comprises 60 residues: Large ribosomal subunit protein uL30 (60 aa).

It belongs to the universal ribosomal protein uL30 family. As to quaternary structure, part of the 50S ribosomal subunit.

The sequence is that of Large ribosomal subunit protein uL30 from Moorella thermoacetica (strain ATCC 39073 / JCM 9320).